Here is a 161-residue protein sequence, read N- to C-terminus: Anaerobic nitrite reductase GLB1 (161 aa).

The Globin domain maps to 9 to 157 (VFTEEQEALV…LVAAIKSEMK (149 aa)). Positions 42–46 (EIAPS) match the Homodimerization motif. The heme b site is built by serine 52, lysine 66, histidine 70, arginine 100, and histidine 105. Positions 112-123 (NEHFETRFALLE) match the Homodimerization motif.

This sequence belongs to the plant globin family. As to quaternary structure, homodimer. Heme b is required as a cofactor. As to expression, root specific.

It is found in the cytoplasm. It localises to the nucleus. The catalysed reaction is Fe(III)-heme b-[protein] + nitric oxide + H2O = Fe(II)-heme b-[protein] + nitrite + 2 H(+). Its function is as follows. Phytoglobin that reduces nitrite to nitric oxide (NO) under anoxic conditions (e.g. during flooding or in waterlogged soil) and upon root nodulation. Required for general plant development and during nodulation, especially for the onset of symbiosis. Monitors nitric oxide (NO) levels during early phase of the nitrogen-fixing symbiosis and buffers oxygen in functioning nodules. May not function as an oxygen storage or transport protein. Has an unusually high affinity for O(2) through a hexacoordinate heme iron because of a very low dissociation constant. The chain is Anaerobic nitrite reductase GLB1 (GLB1) from Trema tomentosum (Peach-leaf poison-bush).